We begin with the raw amino-acid sequence, 129 residues long: NADPH-dependent 7-cyano-7-deazaguanine reductase (129 aa).

Residue C34 is the Thioimide intermediate of the active site. D41 functions as the Proton donor in the catalytic mechanism. Substrate-binding positions include 56–58 and 75–76; these read VEL and HE.

The protein belongs to the GTP cyclohydrolase I family. QueF type 1 subfamily.

The protein resides in the cytoplasm. It carries out the reaction 7-aminomethyl-7-carbaguanine + 2 NADP(+) = 7-cyano-7-deazaguanine + 2 NADPH + 3 H(+). Its pathway is tRNA modification; tRNA-queuosine biosynthesis. Catalyzes the NADPH-dependent reduction of 7-cyano-7-deazaguanine (preQ0) to 7-aminomethyl-7-deazaguanine (preQ1). In Nitrosococcus oceani (strain ATCC 19707 / BCRC 17464 / JCM 30415 / NCIMB 11848 / C-107), this protein is NADPH-dependent 7-cyano-7-deazaguanine reductase.